A 165-amino-acid chain; its full sequence is uncharacterized protein (165 aa).

The chain crosses the membrane as a helical span at residues 10–27 (VSLTIVFVLFFSADVSLT).

The protein localises to the membrane. This is an uncharacterized protein from Saccharomyces cerevisiae (strain ATCC 204508 / S288c) (Baker's yeast).